A 253-amino-acid polypeptide reads, in one-letter code: Tryptophan synthase alpha chain (253 aa).

Catalysis depends on proton acceptor residues glutamate 47 and aspartate 58.

This sequence belongs to the TrpA family. As to quaternary structure, tetramer of two alpha and two beta chains.

It catalyses the reaction (1S,2R)-1-C-(indol-3-yl)glycerol 3-phosphate + L-serine = D-glyceraldehyde 3-phosphate + L-tryptophan + H2O. The protein operates within amino-acid biosynthesis; L-tryptophan biosynthesis; L-tryptophan from chorismate: step 5/5. The alpha subunit is responsible for the aldol cleavage of indoleglycerol phosphate to indole and glyceraldehyde 3-phosphate. The protein is Tryptophan synthase alpha chain of Syntrophotalea carbinolica (strain DSM 2380 / NBRC 103641 / GraBd1) (Pelobacter carbinolicus).